The primary structure comprises 183 residues: Lipid droplet coating protein mpl1 (183 aa).

Belongs to the perilipin family.

It localises to the lipid droplet. Lipid droplet coating protein that regulates lipid metabolism, appressorial turgor pressure, and virulence. Appressorial turgor pressure is important for breaching the insect cuticle during infection. This chain is Lipid droplet coating protein mpl1, found in Metarhizium robertsii (strain ARSEF 23 / ATCC MYA-3075) (Metarhizium anisopliae (strain ARSEF 23)).